The primary structure comprises 162 residues: Ribosome maturation factor RimP (162 aa).

This sequence belongs to the RimP family.

Its subcellular location is the cytoplasm. Its function is as follows. Required for maturation of 30S ribosomal subunits. In Streptococcus gordonii (strain Challis / ATCC 35105 / BCRC 15272 / CH1 / DL1 / V288), this protein is Ribosome maturation factor RimP.